The primary structure comprises 249 residues: DNA repair protein RecO (249 aa).

Belongs to the RecO family.

Functionally, involved in DNA repair and RecF pathway recombination. This Desulforudis audaxviator (strain MP104C) protein is DNA repair protein RecO.